Here is a 361-residue protein sequence, read N- to C-terminus: Chalcone synthase A (361 aa).

The active site involves Cys168.

The protein belongs to the thiolase-like superfamily. Chalcone/stilbene synthases family.

The enzyme catalyses (E)-4-coumaroyl-CoA + 3 malonyl-CoA + 3 H(+) = 2',4,4',6'-tetrahydroxychalcone + 3 CO2 + 4 CoA. It participates in secondary metabolite biosynthesis; flavonoid biosynthesis. In terms of biological role, the primary product of this enzyme is 4,2',4',6'-tetrahydroxychalcone (also termed naringenin-chalcone or chalcone) which can under specific conditions spontaneously isomerize into naringenin. This chain is Chalcone synthase A (CHSA), found in Ipomoea cordatotriloba (Tievine).